The sequence spans 262 residues: Type III pantothenate kinase (262 aa).

5–12 (DAGNTRSK) serves as a coordination point for ATP. Residues Y102 and 110 to 113 (GSDR) contribute to the substrate site. The Proton acceptor role is filled by D112. D132 serves as a coordination point for K(+). ATP is bound at residue T135. T190 serves as a coordination point for substrate.

It belongs to the type III pantothenate kinase family. In terms of assembly, homodimer. NH4(+) serves as cofactor. It depends on K(+) as a cofactor.

The protein localises to the cytoplasm. It carries out the reaction (R)-pantothenate + ATP = (R)-4'-phosphopantothenate + ADP + H(+). It participates in cofactor biosynthesis; coenzyme A biosynthesis; CoA from (R)-pantothenate: step 1/5. In terms of biological role, catalyzes the phosphorylation of pantothenate (Pan), the first step in CoA biosynthesis. The chain is Type III pantothenate kinase from Idiomarina loihiensis (strain ATCC BAA-735 / DSM 15497 / L2-TR).